The primary structure comprises 62 residues: Large ribosomal subunit protein bL35 (62 aa).

Residues 31-62 (HLAQNKTTKQKRQSRKSAQMHSSDLKRFKALI) are disordered. Basic and acidic residues predominate over residues 53-62 (SDLKRFKALI).

This sequence belongs to the bacterial ribosomal protein bL35 family.

In Mycoplasmopsis agalactiae (strain NCTC 10123 / CIP 59.7 / PG2) (Mycoplasma agalactiae), this protein is Large ribosomal subunit protein bL35.